A 353-amino-acid chain; its full sequence is MNLPDRKKALEAAVAYIEKQFGAGSIMSLGRHSATHEISTIKTGALSLDLALGIHGVPKGRVIEIFGPESSGKTTLATHIVANAQKMGGVAAYIDAEHALDPSYASLIGVNIDDLMISQPDCGEDALSIAELLARSGAVDVIVIDSVAALVPKSELEGDIGDVHVGLQARMMSQALRKLTATLSRSQTCAVFINQIREKIGVSFGNPETTTGGRALKFYSSIRLDIRRIGSIKGSDNSDIGNRIKVKVAKNKLAPPFRIAEFDILFNEGISSAGCILDLAVEYNIIEKKGSWFNYQEKKLGQGREFVREELKRNRKLFEEIEKRIYDVIAANKTPSVHANETPQEVPAQTVEA.

Position 67 to 74 (67 to 74 (GPESSGKT)) interacts with ATP.

Belongs to the RecA family.

The protein resides in the cytoplasm. In terms of biological role, can catalyze the hydrolysis of ATP in the presence of single-stranded DNA, the ATP-dependent uptake of single-stranded DNA by duplex DNA, and the ATP-dependent hybridization of homologous single-stranded DNAs. It interacts with LexA causing its activation and leading to its autocatalytic cleavage. The protein is Protein RecA of Chlamydia pneumoniae (Chlamydophila pneumoniae).